The chain runs to 347 residues: 4-hydroxy-2-oxovalerate aldolase 2 (347 aa).

In terms of domain architecture, Pyruvate carboxyltransferase spans 7–259 (VRITDTSLRD…KTGIDFFDIA (253 aa)). 15–16 (RD) lines the substrate pocket. Aspartate 16 serves as a coordination point for Mn(2+). Histidine 19 (proton acceptor) is an active-site residue. The substrate site is built by serine 169 and histidine 198. The Mn(2+) site is built by histidine 198 and histidine 200. Tyrosine 289 serves as a coordination point for substrate.

Belongs to the 4-hydroxy-2-oxovalerate aldolase family.

The catalysed reaction is (S)-4-hydroxy-2-oxopentanoate = acetaldehyde + pyruvate. This chain is 4-hydroxy-2-oxovalerate aldolase 2, found in Mycobacterium ulcerans (strain Agy99).